Here is a 210-residue protein sequence, read N- to C-terminus: Thymidylate kinase (210 aa).

10 to 17 (GPEGAGKS) is an ATP binding site.

This sequence belongs to the thymidylate kinase family.

It catalyses the reaction dTMP + ATP = dTDP + ADP. Phosphorylation of dTMP to form dTDP in both de novo and salvage pathways of dTTP synthesis. The sequence is that of Thymidylate kinase from Pseudomonas fluorescens (strain SBW25).